The chain runs to 264 residues: tRNA (guanine-N(1)-)-methyltransferase (264 aa).

Residues Gly-113 and 133–138 contribute to the S-adenosyl-L-methionine site; that span reads IGDYVL. The tract at residues 244–264 is disordered; the sequence is VQQAATPGGQRRPPWHRDSRA.

This sequence belongs to the RNA methyltransferase TrmD family. Homodimer.

It is found in the cytoplasm. It catalyses the reaction guanosine(37) in tRNA + S-adenosyl-L-methionine = N(1)-methylguanosine(37) in tRNA + S-adenosyl-L-homocysteine + H(+). In terms of biological role, specifically methylates guanosine-37 in various tRNAs. This is tRNA (guanine-N(1)-)-methyltransferase from Frankia alni (strain DSM 45986 / CECT 9034 / ACN14a).